A 315-amino-acid polypeptide reads, in one-letter code: Fucose-specific lectin (315 aa).

Tandem repeats lie at residues 2–53 (STPG…KNVI), 54–103 (GNAK…GGAK), 104–155 (FQVA…LGGA), 156–207 (LPGT…TIFD), 208–260 (RAPP…ITPV), and 261–315 (IQGS…LPPA). The tract at residues 2 to 315 (STPGAQQVLF…QLGRSALPPA (314 aa)) is 6 X approximate tandem repeats. Alpha-L-fucose is bound by residues arginine 25, glutamate 37, tryptophan 44, arginine 73, glutamate 85, tryptophan 94, glycine 98, arginine 126, glutamate 138, tryptophan 146, threonine 150, arginine 177, glutamine 189, tryptophan 198, arginine 230, and glutamine 242. Zn(2+) is bound by residues cysteine 244, aspartate 246, and histidine 252. Residues arginine 282 and glutamate 296 each contribute to the alpha-L-fucose site.

It belongs to the fungal fucose-specific lectin family. As to quaternary structure, homodimer.

Multispecific lectin that is able to recognize L-fucose in all possible linkages. These could be found not only in decomposed plant matter in soil, which is the natural environment for A.fumigatus, but also in various epitopes on human tissues. Mediates binding of A.fumigatus conidia to airway mucin in a fucose dependent manner. Stimulates IL-8 production by human bronchial cells in a dose-dependent manner, contributing to the inflammatory response observed upon the exposure of a patient to A.fumigatus, and thus might be an important virulence factor involved in an early stage of A.fumigatus infection. The protein is Fucose-specific lectin of Aspergillus fumigatus (strain ATCC MYA-4609 / CBS 101355 / FGSC A1100 / Af293) (Neosartorya fumigata).